A 270-amino-acid polypeptide reads, in one-letter code: Formamidopyrimidine-DNA glycosylase (270 aa).

Catalysis depends on Pro2, which acts as the Schiff-base intermediate with DNA. Glu3 serves as the catalytic Proton donor. The active-site Proton donor; for beta-elimination activity is Lys56. DNA-binding residues include His89, Arg107, and Arg151. An FPG-type zinc finger spans residues Thr236–Lys270. Arg260 (proton donor; for delta-elimination activity) is an active-site residue.

This sequence belongs to the FPG family. As to quaternary structure, monomer. The cofactor is Zn(2+).

The enzyme catalyses Hydrolysis of DNA containing ring-opened 7-methylguanine residues, releasing 2,6-diamino-4-hydroxy-5-(N-methyl)formamidopyrimidine.. It carries out the reaction 2'-deoxyribonucleotide-(2'-deoxyribose 5'-phosphate)-2'-deoxyribonucleotide-DNA = a 3'-end 2'-deoxyribonucleotide-(2,3-dehydro-2,3-deoxyribose 5'-phosphate)-DNA + a 5'-end 5'-phospho-2'-deoxyribonucleoside-DNA + H(+). Its function is as follows. Involved in base excision repair of DNA damaged by oxidation or by mutagenic agents. Acts as a DNA glycosylase that recognizes and removes damaged bases. Has a preference for oxidized purines, such as 7,8-dihydro-8-oxoguanine (8-oxoG). Has AP (apurinic/apyrimidinic) lyase activity and introduces nicks in the DNA strand. Cleaves the DNA backbone by beta-delta elimination to generate a single-strand break at the site of the removed base with both 3'- and 5'-phosphates. This is Formamidopyrimidine-DNA glycosylase from Variovorax paradoxus (strain S110).